We begin with the raw amino-acid sequence, 507 residues long: tRNA(Ile)-lysidine synthase (507 aa).

24–29 (SGGGDS) serves as a coordination point for ATP. Residues 370-500 (PPEEAHMAEA…KLLRDFFARL (131 aa)) form the CMP/dCMP-type deaminase domain. Zn(2+) is bound by residues H420, C445, and C448.

It belongs to the tRNA(Ile)-lysidine synthase family.

Its subcellular location is the cytoplasm. It carries out the reaction cytidine(34) in tRNA(Ile2) + L-lysine + ATP = lysidine(34) in tRNA(Ile2) + AMP + diphosphate + H(+). Functionally, ligates lysine onto the cytidine present at position 34 of the AUA codon-specific tRNA(Ile) that contains the anticodon CAU, in an ATP-dependent manner. Cytidine is converted to lysidine, thus changing the amino acid specificity of the tRNA from methionine to isoleucine. The polypeptide is tRNA(Ile)-lysidine synthase (tilS) (Thermus thermophilus (strain ATCC 27634 / DSM 579 / HB8)).